We begin with the raw amino-acid sequence, 224 residues long: 2,5-diamino-6-ribosylamino-4(3H)-pyrimidinone 5'-phosphate reductase (224 aa).

NADP(+)-binding positions include Gly-16, Thr-57, Asp-61, 83–86 (SKLR), Val-134, and 156–159 (GGTL).

Belongs to the HTP reductase family. As to quaternary structure, homodimer.

The enzyme catalyses 2,5-diamino-6-(1-D-ribitylamino)pyrimidin-4(3H)-one 5'-phosphate + NADP(+) = 2,5-diamino-6-(1-D-ribosylamino)pyrimidin-4(3H)-one 5'-phosphate + NADPH + H(+). It catalyses the reaction 2,5-diamino-6-(1-D-ribitylamino)pyrimidin-4(3H)-one 5'-phosphate + NAD(+) = 2,5-diamino-6-(1-D-ribosylamino)pyrimidin-4(3H)-one 5'-phosphate + NADH + H(+). It functions in the pathway cofactor biosynthesis; riboflavin biosynthesis. Its function is as follows. Catalyzes an early step in riboflavin biosynthesis, the NAD(P)H-dependent reduction of the ribose side chain of 2,5-diamino-6-ribosylamino-4(3H)-pyrimidinone 5'-phosphate, yielding 2,5-diamino-6-ribitylamino-4(3H)-pyrimidinone 5'-phosphate. The beta anomer is the authentic substrate, and the alpha anomer can serve as substrate subsequent to spontaneous anomerization. NADPH and NADH function equally well as the reductants. Does not catalyze the reduction of 5-amino-6-(5-phospho-D-ribosylamino)uracil to 5-amino-6-(5-phospho-D-ribitylamino)uracil. The sequence is that of 2,5-diamino-6-ribosylamino-4(3H)-pyrimidinone 5'-phosphate reductase (arfC) from Methanocaldococcus jannaschii (strain ATCC 43067 / DSM 2661 / JAL-1 / JCM 10045 / NBRC 100440) (Methanococcus jannaschii).